Here is a 381-residue protein sequence, read N- to C-terminus: Glycerate 2-kinase (381 aa).

It belongs to the glycerate kinase type-1 family.

It catalyses the reaction (R)-glycerate + ATP = (2R)-2-phosphoglycerate + ADP + H(+). Its function is as follows. Catalyzes the transfer of the phosphate group from adenosine triphosphate (ATP) to (R)-glycerate to form (2R)-2-phosphoglycerate, an enzymatic step in (L)-glucarate/galactarate catabolic pathway. The sequence is that of Glycerate 2-kinase (garK) from Escherichia coli (strain K12).